Reading from the N-terminus, the 432-residue chain is Adenylosuccinate synthetase (432 aa).

GTP-binding positions include 13–19 (GDEGKGK) and 41–43 (GHT). Catalysis depends on Asp-14, which acts as the Proton acceptor. Positions 14 and 41 each coordinate Mg(2+). IMP is bound by residues 14-17 (DEGK), 39-42 (NAGH), Thr-130, Arg-144, Gln-225, Thr-240, and Arg-304. His-42 (proton donor) is an active-site residue. 300–306 (ATTGRKR) provides a ligand contact to substrate. GTP-binding positions include Arg-306, 332-334 (KLD), and 415-417 (STG).

The protein belongs to the adenylosuccinate synthetase family. As to quaternary structure, homodimer. Mg(2+) is required as a cofactor.

It localises to the cytoplasm. The enzyme catalyses IMP + L-aspartate + GTP = N(6)-(1,2-dicarboxyethyl)-AMP + GDP + phosphate + 2 H(+). It participates in purine metabolism; AMP biosynthesis via de novo pathway; AMP from IMP: step 1/2. In terms of biological role, plays an important role in the de novo pathway of purine nucleotide biosynthesis. Catalyzes the first committed step in the biosynthesis of AMP from IMP. The polypeptide is Adenylosuccinate synthetase (Pseudoalteromonas atlantica (strain T6c / ATCC BAA-1087)).